Here is a 63-residue protein sequence, read N- to C-terminus: Large ribosomal subunit protein bL28 (63 aa).

The protein belongs to the bacterial ribosomal protein bL28 family.

This chain is Large ribosomal subunit protein bL28, found in Beutenbergia cavernae (strain ATCC BAA-8 / DSM 12333 / CCUG 43141 / JCM 11478 / NBRC 16432 / NCIMB 13614 / HKI 0122).